We begin with the raw amino-acid sequence, 372 residues long: L-selectin (372 aa).

An N-terminal signal peptide occupies residues 1–28 (MIFPRKCQSTQRDLWNIFKLWGWTMLCC). Positions 29-38 (DFLAHHGTDC) are excised as a propeptide. Over 39–332 (WTYHYSENPM…FSMIKEGDYN (294 aa)) the chain is Extracellular. Positions 55 to 155 (RFCRENYTDL…ACHKPKAALC (101 aa)) constitute a C-type lectin domain. Disulfide bonds link Cys57–Cys155, Cys128–Cys147, Cys128–Cys160, Cys160–Cys171, Cys165–Cys180, Cys182–Cys191, Cys197–Cys241, Cys227–Cys254, Cys259–Cys303, and Cys289–Cys316. 2 N-linked (GlcNAc...) asparagine glycosylation sites follow: Asn60 and Asn104. 5 residues coordinate Ca(2+): Glu118, Asn120, Glu126, Asn143, and Asp144. The EGF-like domain occupies 156–192 (YTASCQPWSCSGHGECVEIINNYTCNCDVGYYGPQCQ). N-linked (GlcNAc...) asparagine glycosylation occurs at Asn177. Sushi domains lie at 195-256 (IQCE…TCQV) and 257-318 (IQCE…ICQK). N-linked (GlcNAc...) asparagine glycosylation is found at Asn226, Asn232, Asn246, and Asn271. A helical transmembrane segment spans residues 333-355 (PLFIPVAVMVTAFSGLAFIIWLA). Topologically, residues 356–372 (RRLKKGKKSKKSMDDPY) are cytoplasmic.

Belongs to the selectin/LECAM family. As to quaternary structure, interaction with SELPLG/PSGL1 and PODXL2 is required for promoting recruitment and rolling of leukocytes. This interaction is dependent on the sialyl Lewis X glycan modification of SELPLG and PODXL2, and tyrosine sulfation modifications of SELPLG. Sulfation on 'Tyr-51' of SELPLG is important for L-selectin binding. N-glycosylated.

The protein localises to the cell membrane. Its function is as follows. Calcium-dependent lectin that mediates cell adhesion by binding to glycoproteins on neighboring cells. Mediates the adherence of lymphocytes to endothelial cells of high endothelial venules in peripheral lymph nodes. Promotes initial tethering and rolling of leukocytes in endothelia. In Macaca mulatta (Rhesus macaque), this protein is L-selectin (SELL).